The following is a 196-amino-acid chain: Signaling threshold-regulating transmembrane adapter 1 (196 aa).

An N-terminal signal peptide occupies residues 1-24; the sequence is MNQADPRLRAVCLWTLTSAAMSRG. Residues 25 to 40 lie on the Extracellular side of the membrane; the sequence is DNCTDLLALGIPSITQ. The N-linked (GlcNAc...) asparagine glycan is linked to asparagine 26. Residues 41-61 traverse the membrane as a helical segment; the sequence is AWGLWVLLGAVTLLFLISLAA. The Cytoplasmic segment spans residues 62–196; the sequence is HLSQWTRGRS…AYANSQPAAS (135 aa). A phosphoserine mark is found at serine 80 and serine 83. Tyrosine 90 is modified (phosphotyrosine). An interaction with GRB2 region spans residues 90-93; that stretch reads YGNL. Phosphoserine is present on serine 102. Residue tyrosine 127 is modified to Phosphotyrosine. Residues 132–167 form a disordered region; sequence LRPPQGRIPGPGTPVKYSEVVLDSEPKSQASGPEPE. Threonine 144 is modified (phosphothreonine). The tract at residues 146 to 151 is interaction with PTPN11; that stretch reads VKYSEV. 2 positions are modified to phosphotyrosine: tyrosine 148 and tyrosine 169. The interaction with CSK stretch occupies residues 169-172; that stretch reads YASV. Residue serine 182 is modified to Phosphoserine. Tyrosine 188 carries the post-translational modification Phosphotyrosine. The interval 188-191 is interaction with GRB2; sequence YANS.

In terms of assembly, homodimer; disulfide-linked. When phosphorylated, interacts with PTPN11/SHP2, GRB2 and CSK. In terms of processing, phosphorylated on tyrosines by LCK, FYN or ZAP70 upon TCR activation; which leads to the recruitment of PTPN11, GRB2 and CSK. In terms of tissue distribution, specifically expressed in T- and B-cells. Present in plasma cells but not in germinal center B-cells (at protein level). Expressed in T- and B-cell lymphoma.

Its subcellular location is the cell membrane. Negatively regulates TCR (T-cell antigen receptor)-mediated signaling in T-cells. Involved in positive selection of T-cells. This chain is Signaling threshold-regulating transmembrane adapter 1 (SIT1), found in Homo sapiens (Human).